Reading from the N-terminus, the 393-residue chain is Short-chain dehydrogenase/reductase family 42E member 1 (393 aa).

Tyr152 serves as the catalytic Proton acceptor. Position 156 (Lys156) interacts with NAD(+). The next 2 membrane-spanning stretches (helical) occupy residues 282–302 (LPLT…FILG) and 371–391 (GLLV…SVIL).

It belongs to the 3-beta-HSD family.

It is found in the membrane. This chain is Short-chain dehydrogenase/reductase family 42E member 1 (SDR42E1), found in Homo sapiens (Human).